The chain runs to 326 residues: Protein spaetzle (326 aa).

The first 25 residues, 1–25 (MMTPMWISLFKVLLLLFAFFATYEA), serve as a signal peptide directing secretion. An N-linked (GlcNAc...) asparagine glycan is attached at asparagine 48. Residues 56 to 82 (FMPIPTQHDDPTQKQKQNQNQSPIPET) are disordered. Positions 69–80 (KQKQNQNQSPIP) are enriched in polar residues. N-linked (GlcNAc...) asparagine glycosylation is found at asparagine 114 and asparagine 164. Residues 152-174 (YRPPQSPARPLRNDTKEHNPCAK) are disordered. A compositionally biased stretch (basic and acidic residues) spans 162–174 (LRNDTKEHNPCAK). Positions 228–322 (FLCRSIRKLV…FKIPSCCKCA (95 aa)) constitute a Spaetzle domain. 3 disulfide bridges follow: cysteine 230–cysteine 288, cysteine 267–cysteine 319, and cysteine 274–cysteine 321.

In terms of assembly, homodimer; disulfide-linked. In the presence of Tl, crystal structures show one Tl molecule bound to a spaetzle C-106 homodimer. However, the active complex probably consists of two Tl molecules bound to a spaetzle C-106 homodimer. This is supported by in vitro experiments which also show binding of the spaetzle C-106 dimer to 2 Tl receptors. Ligand binding induces conformational changes in the extracellular domain of Tl. This may enable a secondary homodimerization interface at the C-terminus of the Tl extracellular domain. During embryonic development proteolytically processed by activated ea/easter; ea cleaves the signal peptide and also generates the C-terminal 12 kDa active ligand for the Toll receptor, C-106 (except for isoform 8.24 and isoform 11.27 as they do not contain the cleavage site). During the immune response, cleaved in the same manner by SPE. Post-translationally, extracellular forms of isoform 8.19 and isoform 11.7 are glycosylated.

The protein localises to the secreted. In terms of biological role, the activated form, spaetzle C-106, acts as a ligand for the Toll receptor. Binding to Toll activates the Toll signaling pathway and induces expression of the antifungal peptide drosomycin. Component of the extracellular signaling pathway that establishes dorsal-ventral polarity in the embryo. The protein is Protein spaetzle of Drosophila melanogaster (Fruit fly).